Consider the following 178-residue polypeptide: Alkyl hydroperoxide reductase AhpD (178 aa).

Residue C130 is the Proton donor of the active site. C130 and C133 are oxidised to a cystine. Catalysis depends on C133, which acts as the Cysteine sulfenic acid (-SOH) intermediate.

The protein belongs to the AhpD family. As to quaternary structure, homotrimer.

It catalyses the reaction N(6)-[(R)-dihydrolipoyl]-L-lysyl-[lipoyl-carrier protein] + a hydroperoxide = N(6)-[(R)-lipoyl]-L-lysyl-[lipoyl-carrier protein] + an alcohol + H2O. In terms of biological role, antioxidant protein with alkyl hydroperoxidase activity. Required for the reduction of the AhpC active site cysteine residues and for the regeneration of the AhpC enzyme activity. This is Alkyl hydroperoxide reductase AhpD from Mycobacterium ulcerans (strain Agy99).